Consider the following 122-residue polypeptide: Small ribosomal subunit protein uS10y (122 aa).

It belongs to the universal ribosomal protein uS10 family.

The sequence is that of Small ribosomal subunit protein uS10y (RPS20B) from Arabidopsis thaliana (Mouse-ear cress).